We begin with the raw amino-acid sequence, 691 residues long: Dipeptidyl peptidase 3 (691 aa).

Residue histidine 431 coordinates Zn(2+). Glutamate 432 is an active-site residue. Zn(2+) is bound by residues histidine 436 and glutamate 492.

It belongs to the peptidase M49 family. Requires Zn(2+) as cofactor.

Its subcellular location is the cytoplasm. The enzyme catalyses Release of an N-terminal dipeptide from a peptide comprising four or more residues, with broad specificity. Also acts on dipeptidyl 2-naphthylamides.. In Dictyostelium discoideum (Social amoeba), this protein is Dipeptidyl peptidase 3 (dpp3-1).